Here is an 823-residue protein sequence, read N- to C-terminus: DNA ligase (823 aa).

NAD(+) contacts are provided by residues 31–35 (DDAFD) and 73–74 (SQ). Residue K100 is the N6-AMP-lysine intermediate of the active site. The NAD(+) site is built by R121, E163, K275, and K296. Residues C387, C390, C403, and C408 each contribute to the Zn(2+) site. BRCT domains are found at residues 562-655 (QAES…TGET), 654-742 (ETVH…DAHV), and 741-823 (HVHA…TPGT).

It belongs to the NAD-dependent DNA ligase family. LigA subfamily. The cofactor is Mg(2+). Mn(2+) is required as a cofactor.

The catalysed reaction is NAD(+) + (deoxyribonucleotide)n-3'-hydroxyl + 5'-phospho-(deoxyribonucleotide)m = (deoxyribonucleotide)n+m + AMP + beta-nicotinamide D-nucleotide.. Functionally, DNA ligase that catalyzes the formation of phosphodiester linkages between 5'-phosphoryl and 3'-hydroxyl groups in double-stranded DNA using NAD as a coenzyme and as the energy source for the reaction. It is essential for DNA replication and repair of damaged DNA. This chain is DNA ligase, found in Treponema pallidum (strain Nichols).